A 148-amino-acid chain; its full sequence is Small ribosomal subunit protein uS7m (148 aa).

The protein belongs to the universal ribosomal protein uS7 family. In terms of assembly, part of the small ribosomal subunit.

The protein resides in the mitochondrion. In terms of biological role, one of the primary rRNA binding proteins, it binds directly to 18S rRNA where it nucleates assembly of the head domain of the small subunit. The polypeptide is Small ribosomal subunit protein uS7m (RPS7) (Triticum aestivum (Wheat)).